Here is a 116-residue protein sequence, read N- to C-terminus: Beta-2-microglobulin (116 aa).

Positions 1–19 (MRAIITFALFCVLYITVQA) are cleaved as a signal peptide. The 88-residue stretch at 24 to 111 (PKVQVYSHFP…RHMSNTNAYS (88 aa)) folds into the Ig-like C1-type domain. The cysteines at positions 44 and 99 are disulfide-linked.

The protein belongs to the beta-2-microglobulin family. In terms of assembly, heterodimer of an alpha chain and a beta chain. Beta-2-microglobulin is the beta-chain of major histocompatibility complex class I molecules.

Its subcellular location is the secreted. Component of the class I major histocompatibility complex (MHC). Involved in the presentation of peptide antigens to the immune system. The chain is Beta-2-microglobulin (b2m) from Labeobarbus intermedius (Lake tana barbels).